Consider the following 466-residue polypeptide: Metaxin-1 (466 aa).

The segment covering 1 to 19 (MLLGGPPRSPRSGTSPKGP) has biased composition (low complexity). The disordered stretch occupies residues 1–133 (MLLGGPPRSP…AVAGGGPRQG (133 aa)). A compositionally biased stretch (polar residues) spans 20 to 36 (WSSTGHVQFGKSPQTWP). Residues 90-110 (ARGPVPRSSAASRARRSLASP) show a composition bias toward low complexity. Glycyl lysine isopeptide (Lys-Gly) (interchain with G-Cter in ubiquitin) cross-links involve residues lysine 187, lysine 190, lysine 227, and lysine 317. A helical membrane pass occupies residues 421–441 (ILSVLAGLAAMVGYALLSGIV).

It belongs to the metaxin family. As to quaternary structure, interacts with MTX2/metaxin-2. Associates with the mitochondrial contact site and cristae organizing system (MICOS) complex, composed of at least MICOS10/MIC10, CHCHD3/MIC19, CHCHD6/MIC25, APOOL/MIC27, IMMT/MIC60, APOO/MIC23/MIC26 and QIL1/MIC13. This complex was also known under the names MINOS or MitOS complex. The MICOS complex associates with mitochondrial outer membrane proteins SAMM50, MTX1 and MTX2 (together described as components of the mitochondrial outer membrane sorting assembly machinery (SAM) complex) and DNAJC11, mitochondrial inner membrane protein TMEM11 and with HSPA9. The MICOS and SAM complexes together with DNAJC11 are part of a large protein complex spanning both membranes termed the mitochondrial intermembrane space bridging (MIB) complex. Interacts with ARMC1. Ubiquitinated by PRKN during mitophagy, leading to its degradation and enhancement of mitophagy. Deubiquitinated by USP30.

It is found in the membrane. The protein localises to the mitochondrion outer membrane. In terms of biological role, involved in transport of proteins into the mitochondrion. Essential for embryonic development. The polypeptide is Metaxin-1 (MTX1) (Homo sapiens (Human)).